The sequence spans 347 residues: Quinolinate synthase (347 aa).

Iminosuccinate-binding residues include histidine 47 and serine 68. A [4Fe-4S] cluster-binding site is contributed by cysteine 113. Iminosuccinate contacts are provided by residues 139–141 (YAN) and serine 156. Cysteine 200 provides a ligand contact to [4Fe-4S] cluster. Iminosuccinate is bound by residues 226-228 (HPE) and threonine 243. Cysteine 297 lines the [4Fe-4S] cluster pocket.

It belongs to the quinolinate synthase family. Type 1 subfamily. It depends on [4Fe-4S] cluster as a cofactor.

The protein resides in the cytoplasm. It carries out the reaction iminosuccinate + dihydroxyacetone phosphate = quinolinate + phosphate + 2 H2O + H(+). The protein operates within cofactor biosynthesis; NAD(+) biosynthesis; quinolinate from iminoaspartate: step 1/1. Functionally, catalyzes the condensation of iminoaspartate with dihydroxyacetone phosphate to form quinolinate. This is Quinolinate synthase from Salmonella agona (strain SL483).